The primary structure comprises 563 residues: Cytochrome P450 monooxygenase phqL (563 aa).

Transmembrane regions (helical) follow at residues 20–40 (ENFS…IIIF), 52–72 (IPVG…FVPG), and 80–100 (ALWL…VSIL). N279 is a glycosylation site (N-linked (GlcNAc...) asparagine). A helical membrane pass occupies residues 362-382 (LVIFAGSGTVAVTIIGCLYFL). An N-linked (GlcNAc...) asparagine glycan is attached at N419. C502 provides a ligand contact to heme.

This sequence belongs to the cytochrome P450 family. Requires heme as cofactor.

Its subcellular location is the membrane. It functions in the pathway alkaloid biosynthesis. In terms of biological role, cytochrome P450 monooxygenase; part of the gene cluster that mediates the biosynthesis of paraherquamide, a fungal indole alkaloid that belongs to a family of natural products containing a characteristic bicyclo[2.2.2]diazaoctane core. The first steps in the biosynthesis of paraherquamide is the production of the beta-methyl-proline precursor from L-isoleucine. They require oxidation of a terminally hydroxylated L-isoleucine to the corresponding aldehyde by enzymes which have still to be identified. Spontaneous cyclization and dehydration would yield the 4-methyl pyrolline-5-carboxylic acid, which is then reduced by the pyrroline-5-carboxylate reductase phqD leading to the beta-methyl-proline precursor. The next step of paraherquamide biosynthesis involves coupling of beta-methyl-proline and L-tryptophan by the bimodular NRPS phqB, to produce a monooxopiperazine intermediate. The reductase (R) domain of phqB utilizes NADPH for hydride transfer to reduce the thioester bond of the T domain-tethered linear dipeptide to a hemithioaminal intermediate, which spontaneously cleaves the C-S bond to release the aldehyde product. This compound undergoes spontaneous cyclization and dehydration to give a dienamine which is reverse prenylated at C-2 by the reverse prenyltransferase phqJ. The other prenyltransferase present in the cluster, phqI may be a redundant gene in the pathway. During biosynthetic assembly, the key step to produce the polycyclic core is catalyzed by the bifunctional reductase and intramolecular [4+2] Diels-Alderase, phqE, resulting in formation of the [2.2.2] diazaoctane intermediate preparaherquamide. Following formation of preparaherquamide, an indole 2,3-epoxidation-initiated pinacol-like rearrangement is catalyzed by the phqK FAD-dependent monooxygenase. The prenyltransferase phqA, the cytochrome P450 monooxygenase phqL, and the FAD-linked oxidoreductase phqH (or the cytochrome P450 monooxygenase phqM), are proposed to be involved in the formation of the pyran ring. The FAD-dependent monooxygenase phqK is likely responsible for generation of the spiro-oxindole, and the N-methylation is likely mediated by the phqN methyltransferase leading to the isolable natural product paraherquamide F. However, the order of these biosynthetic steps has still to be determined. In late-stage paraherquamide biosynthesis, the third P450 monooxygenase, phqO, is probably responsible for the C-14 hydroxylation, transforming paraherquamide F to paraherquamide G, and paraherquamide E to the final product paraherquamide A. The expansion from the 6-membered ring pyran (in paraherquamides F and G) to the 7-membered dioxepin ring (in paraherquamides A and E) represents a poorly understood but intriguing process that probably involves the 2-oxoglutarate-dependent dioxygenase phqC. Finally, the remaining members of the paraherquamide cluster, including phqI as well as phqM (or phqH), do not have a clearly prescribed role and appear to be redundant. In Penicillium fellutanum, this protein is Cytochrome P450 monooxygenase phqL.